The primary structure comprises 345 residues: Heat stress transcription factor A-4c (345 aa).

Residues 11–105 (LPPFLTKTYE…LMKNIHRRKP (95 aa)) mediate DNA binding. A hydrophobic repeat HR-A/B region spans residues 119–185 (PLTESERRSM…SIVAYVSQVL (67 aa)). The Nuclear localization signal motif lies at 199–203 (RRKRR). Positions 226–235 (LTFWENLVSE) match the AHA1 motif. The tract at residues 240–329 (SGLQSSSMDH…NGNKIGNQRT (90 aa)) is disordered. Residues 274 to 283 (PPVTVTAPAP) are compositionally biased toward low complexity. The AHA2 motif lies at 289 to 298 (DDFWEQCLTE). 2 stretches are compositionally biased toward polar residues: residues 296-308 (LTEN…QQEV) and 317-329 (NDNN…NQRT).

Belongs to the HSF family. Class A subfamily. Homotrimer. In terms of processing, exhibits temperature-dependent phosphorylation. As to expression, expressed in roots, seedlings and at lower levels in leaves.

It is found in the nucleus. Transcriptional activator that specifically binds DNA sequence 5'-AGAAnnTTCT-3' known as heat shock promoter elements (HSE). May be involved in general response to auxin. The chain is Heat stress transcription factor A-4c (HSFA4C) from Arabidopsis thaliana (Mouse-ear cress).